Reading from the N-terminus, the 375-residue chain is Succinyl-diaminopimelate desuccinylase (375 aa).

Position 66 (His66) interacts with Zn(2+). Residue Asp68 is part of the active site. Zn(2+) is bound at residue Asp99. Glu133 acts as the Proton acceptor in catalysis. Glu134, Glu162, and His348 together coordinate Zn(2+).

Belongs to the peptidase M20A family. DapE subfamily. As to quaternary structure, homodimer. Zn(2+) serves as cofactor. Requires Co(2+) as cofactor.

It carries out the reaction N-succinyl-(2S,6S)-2,6-diaminopimelate + H2O = (2S,6S)-2,6-diaminopimelate + succinate. Its pathway is amino-acid biosynthesis; L-lysine biosynthesis via DAP pathway; LL-2,6-diaminopimelate from (S)-tetrahydrodipicolinate (succinylase route): step 3/3. Its function is as follows. Catalyzes the hydrolysis of N-succinyl-L,L-diaminopimelic acid (SDAP), forming succinate and LL-2,6-diaminopimelate (DAP), an intermediate involved in the bacterial biosynthesis of lysine and meso-diaminopimelic acid, an essential component of bacterial cell walls. This is Succinyl-diaminopimelate desuccinylase from Salmonella dublin (strain CT_02021853).